Here is an 81-residue protein sequence, read N- to C-terminus: Protein translocase subunit SecE (81 aa).

A helical transmembrane segment spans residues 50 to 70; the sequence is VAVILMVILVSTVIYFVDQIF.

This sequence belongs to the SecE/SEC61-gamma family. Component of the Sec protein translocase complex. Heterotrimer consisting of SecY, SecE and SecG subunits. The heterotrimers can form oligomers, although 1 heterotrimer is thought to be able to translocate proteins. Interacts with the ribosome. Interacts with SecDF, and other proteins may be involved. Interacts with SecA.

It localises to the cell inner membrane. It is found in the cellular thylakoid membrane. In terms of biological role, essential subunit of the Sec protein translocation channel SecYEG. Clamps together the 2 halves of SecY. May contact the channel plug during translocation. In Synechocystis sp. (strain ATCC 27184 / PCC 6803 / Kazusa), this protein is Protein translocase subunit SecE.